The primary structure comprises 258 residues: Tetratricopeptide repeat protein 33 (258 aa).

TPR repeat units follow at residues 59–92 (SKRL…TPGD), 93–126 (AALY…NPHF), and 127–160 (VEAW…CPAN). The segment at 231–258 (SASGSENLSDRKEDKVETNDSKEFIKAR) is disordered. Basic and acidic residues predominate over residues 238 to 258 (LSDRKEDKVETNDSKEFIKAR).

The protein is Tetratricopeptide repeat protein 33 (ttc33) of Xenopus laevis (African clawed frog).